A 1197-amino-acid chain; its full sequence is Sensor protein EvgS (1197 aa).

A signal peptide spans 1–21 (MKFLPYIFLLCCGLWSTISFA). Residues 22–325 (DEDYIEYRGI…SMTDENGSVR (304 aa)) are Cytoplasmic-facing. Residues 326–346 (GVMGDILNIITLQTGLNFSPI) traverse the membrane as a helical segment. Over 347–537 (TVSHNIHAGT…TWDLYSEQFY (191 aa)) the chain is Periplasmic. Residues 538 to 558 (IVTTLSVLLVGSSLLWGFYLL) traverse the membrane as a helical segment. The Cytoplasmic segment spans residues 559 to 1197 (RSVRRRKVIQ…EIAVFCQKND (639 aa)). A Histidine kinase domain is found at 718–938 (TMSHEIRTPI…TFTITIPVEI (221 aa)). Position 721 is a phosphohistidine; by autocatalysis (histidine 721). The Response regulatory domain maps to 960–1074 (SILIADDHPT…VLKTHLSQLH (115 aa)). A 4-aspartylphosphate modification is found at aspartate 1009. One can recognise an HPt domain in the interval 1098-1197 (DLQLMQEILM…EIAVFCQKND (100 aa)). Histidine 1137 is modified (phosphohistidine).

Activation requires a sequential transfer of a phosphate group from a His in the primary transmitter domain, to an Asp in the receiver domain and to a His in the secondary transmitter domain.

It is found in the cell inner membrane. The catalysed reaction is ATP + protein L-histidine = ADP + protein N-phospho-L-histidine.. Its function is as follows. Member of the two-component regulatory system EvgS/EvgA. Phosphorylates EvgA via a four-step phosphorelay in response to environmental signals. The sequence is that of Sensor protein EvgS (evgS) from Escherichia coli (strain K12).